The following is a 405-amino-acid chain: Bifunctional enzyme IspD/IspF (405 aa).

The interval 1–240 (MTLADKPVLS…KLLLDEPKYR (240 aa)) is 2-C-methyl-D-erythritol 4-phosphate cytidylyltransferase. Positions 240–405 (RVGTGYDIHR…LLYKIAPLHN (166 aa)) are 2-C-methyl-D-erythritol 2,4-cyclodiphosphate synthase. The a divalent metal cation site is built by Asp-246 and His-248. 4-CDP-2-C-methyl-D-erythritol 2-phosphate contacts are provided by residues 246–248 (DIH) and 277–278 (HS). His-285 contributes to the a divalent metal cation binding site. Residues 299–301 (DIG), 375–378 (TTTE), and Arg-385 each bind 4-CDP-2-C-methyl-D-erythritol 2-phosphate.

This sequence in the N-terminal section; belongs to the IspD/TarI cytidylyltransferase family. IspD subfamily. It in the C-terminal section; belongs to the IspF family. Requires a divalent metal cation as cofactor.

It carries out the reaction 2-C-methyl-D-erythritol 4-phosphate + CTP + H(+) = 4-CDP-2-C-methyl-D-erythritol + diphosphate. The catalysed reaction is 4-CDP-2-C-methyl-D-erythritol 2-phosphate = 2-C-methyl-D-erythritol 2,4-cyclic diphosphate + CMP. The protein operates within isoprenoid biosynthesis; isopentenyl diphosphate biosynthesis via DXP pathway; isopentenyl diphosphate from 1-deoxy-D-xylulose 5-phosphate: step 2/6. Its pathway is isoprenoid biosynthesis; isopentenyl diphosphate biosynthesis via DXP pathway; isopentenyl diphosphate from 1-deoxy-D-xylulose 5-phosphate: step 4/6. Bifunctional enzyme that catalyzes the formation of 4-diphosphocytidyl-2-C-methyl-D-erythritol from CTP and 2-C-methyl-D-erythritol 4-phosphate (MEP) (IspD), and catalyzes the conversion of 4-diphosphocytidyl-2-C-methyl-D-erythritol 2-phosphate (CDP-ME2P) to 2-C-methyl-D-erythritol 2,4-cyclodiphosphate (ME-CPP) with a corresponding release of cytidine 5-monophosphate (CMP) (IspF). This Wolbachia sp. subsp. Brugia malayi (strain TRS) protein is Bifunctional enzyme IspD/IspF.